Here is a 503-residue protein sequence, read N- to C-terminus: ATP synthase subunit alpha (503 aa).

170 to 177 (GDRQTGKT) contributes to the ATP binding site.

This sequence belongs to the ATPase alpha/beta chains family. F-type ATPases have 2 components, CF(1) - the catalytic core - and CF(0) - the membrane proton channel. CF(1) has five subunits: alpha(3), beta(3), gamma(1), delta(1), epsilon(1). CF(0) has three main subunits: a(1), b(2) and c(9-12). The alpha and beta chains form an alternating ring which encloses part of the gamma chain. CF(1) is attached to CF(0) by a central stalk formed by the gamma and epsilon chains, while a peripheral stalk is formed by the delta and b chains.

It is found in the cell inner membrane. It catalyses the reaction ATP + H2O + 4 H(+)(in) = ADP + phosphate + 5 H(+)(out). Its function is as follows. Produces ATP from ADP in the presence of a proton gradient across the membrane. The alpha chain is a regulatory subunit. The chain is ATP synthase subunit alpha from Pseudothermotoga lettingae (strain ATCC BAA-301 / DSM 14385 / NBRC 107922 / TMO) (Thermotoga lettingae).